A 298-amino-acid polypeptide reads, in one-letter code: Inosose dehydratase (298 aa).

It belongs to the IolE/MocC family. Glutathione is required as a cofactor. Requires Co(2+) as cofactor. It depends on Mn(2+) as a cofactor.

The catalysed reaction is scyllo-inosose = 3D-3,5/4-trihydroxycyclohexane-1,2-dione + H2O. In terms of biological role, catalyzes the dehydration of inosose (2-keto-myo-inositol, 2KMI or 2,4,6/3,5-pentahydroxycyclohexanone) to 3D-(3,5/4)-trihydroxycyclohexane-1,2-dione (D-2,3-diketo-4-deoxy-epi-inositol). The protein is Inosose dehydratase of Serratia proteamaculans (strain 568).